A 499-amino-acid polypeptide reads, in one-letter code: Anaerobic nitric oxide reductase flavorubredoxin (499 aa).

The tract at residues 30-210 is zinc metallo-hydrolase; it reads TKGTSYNSYL…PFSALVTAKI (181 aa). The Fe cation site is built by His-79, Glu-81, Asp-83, His-147, Asp-166, and His-227. Residues 254 to 393 enclose the Flavodoxin-like domain; the sequence is ITLFYDSMSN…LCREHGQFIA (140 aa). FMN is bound by residues 260 to 264 and 342 to 369; these read SMSNN and AFGS…ETAV. In terms of domain architecture, Rubredoxin-like spans 447–498; the sequence is KQCMLCTVCNWVYDPEIGEPNQGVEPNTAWIDVPDYFLCPECNLGKDVFVEV. 4 residues coordinate Fe cation: Cys-452, Cys-455, Cys-485, and Cys-488.

This sequence in the N-terminal section; belongs to the zinc metallo-hydrolase group 3 family. In terms of assembly, homotetramer. Fe cation serves as cofactor. It depends on FMN as a cofactor.

It is found in the cytoplasm. It functions in the pathway nitrogen metabolism; nitric oxide reduction. In terms of biological role, anaerobic nitric oxide reductase; uses NADH to detoxify nitric oxide (NO), protecting several 4Fe-4S NO-sensitive enzymes. Has at least 2 reductase partners, only one of which (NorW, flavorubredoxin reductase) has been identified. NO probably binds to the di-iron center; electrons enter from the NorW at rubredoxin and are transferred sequentially to the FMN center and the di-iron center. Also able to function as an aerobic oxygen reductase. The chain is Anaerobic nitric oxide reductase flavorubredoxin from Aliivibrio salmonicida (strain LFI1238) (Vibrio salmonicida (strain LFI1238)).